A 294-amino-acid polypeptide reads, in one-letter code: Shikimate dehydrogenase (NADP(+)) (294 aa).

Residues 22–24 (SLS) and Ser-69 each bind shikimate. The active-site Proton acceptor is Lys-73. Residues Asn-94 and Asp-111 each contribute to the shikimate site. NADP(+) contacts are provided by residues 135-139 (GAGGA) and Leu-236. Shikimate is bound at residue Tyr-238. Gly-260 is an NADP(+) binding site.

This sequence belongs to the shikimate dehydrogenase family. Homodimer.

It carries out the reaction shikimate + NADP(+) = 3-dehydroshikimate + NADPH + H(+). Its pathway is metabolic intermediate biosynthesis; chorismate biosynthesis; chorismate from D-erythrose 4-phosphate and phosphoenolpyruvate: step 4/7. Involved in the biosynthesis of the chorismate, which leads to the biosynthesis of aromatic amino acids. Catalyzes the reversible NADPH linked reduction of 3-dehydroshikimate (DHSA) to yield shikimate (SA). The sequence is that of Shikimate dehydrogenase (NADP(+)) from Streptococcus equi subsp. zooepidemicus (strain MGCS10565).